Here is a 161-residue protein sequence, read N- to C-terminus: Small ribosomal subunit protein uS8m (161 aa).

It belongs to the universal ribosomal protein uS8 family. In terms of assembly, component of the mitochondrial small ribosomal subunit (mt-SSU). Mature N.crassa 74S mitochondrial ribosomes consist of a small (37S) and a large (54S) subunit. The 37S small subunit contains a 16S ribosomal RNA (16S mt-rRNA) and 32 different proteins. The 54S large subunit contains a 23S rRNA (23S mt-rRNA) and 42 different proteins.

The protein resides in the mitochondrion. Component of the mitochondrial ribosome (mitoribosome), a dedicated translation machinery responsible for the synthesis of mitochondrial genome-encoded proteins, including at least some of the essential transmembrane subunits of the mitochondrial respiratory chain. The mitoribosomes are attached to the mitochondrial inner membrane and translation products are cotranslationally integrated into the membrane. This chain is Small ribosomal subunit protein uS8m (mrps8), found in Neurospora crassa (strain ATCC 24698 / 74-OR23-1A / CBS 708.71 / DSM 1257 / FGSC 987).